The sequence spans 335 residues: Zinc-type alcohol dehydrogenase-like protein SAS2087 (335 aa).

It belongs to the zinc-containing alcohol dehydrogenase family. Quinone oxidoreductase subfamily.

The protein is Zinc-type alcohol dehydrogenase-like protein SAS2087 of Staphylococcus aureus (strain MSSA476).